A 185-amino-acid chain; its full sequence is MIKETIEDAKDRMEKSVESLRSQMSKVRTGRAHPSILDSVMVNYYGTDTPLKQLANITTEDSRTLALTVFDKSASAAVEKAIINSDLGLNPASAGAVIRIPLPPLTEERRRDLVKIVRAEAENGRIAVRNIRRDANGDIKDLLKEKEITEDEERNAEEEIQKLTDKFVKQIDEALKAKEADLMEI.

The protein belongs to the RRF family.

The protein localises to the cytoplasm. In terms of biological role, responsible for the release of ribosomes from messenger RNA at the termination of protein biosynthesis. May increase the efficiency of translation by recycling ribosomes from one round of translation to another. In Idiomarina loihiensis (strain ATCC BAA-735 / DSM 15497 / L2-TR), this protein is Ribosome-recycling factor.